The primary structure comprises 352 residues: Non-disjunction protein 1 (352 aa).

In terms of assembly, interacts with MPS3.

The protein localises to the nucleus. It is found in the chromosome. It localises to the telomere. Functionally, required for telomeric clustering (bouquet stage) during meiosis 1 prophase, formation and efficient homolog pairing, meiosis 1 disjunction, and telomere deletion during meiosis. Also promotes meiotic recombination. This Saccharomyces cerevisiae (strain ATCC 204508 / S288c) (Baker's yeast) protein is Non-disjunction protein 1 (NDJ1).